We begin with the raw amino-acid sequence, 226 residues long: Beta-casein (226 aa).

Residues 1-15 (MKVLILACLVALALA) form the signal peptide. A Phosphothreonine; in form 5-P modification is found at threonine 18. The residue at position 21 (serine 21) is a Phosphoserine; in form 4-P and form 5-P. Serine 23 is modified (phosphoserine; in form 3-P, form 4-P and form 5-P). A phosphoserine; in form 1-P, form 2-P, form 3-P, form 4-P and form 5-P mark is found at serine 24 and serine 25.

Belongs to the beta-casein family. Post-translationally, form 1-P is phosphorylated once; half of the molecules are phosphorylated on Ser-24, half on Ser-25. Mammary gland specific. Secreted in milk.

The protein resides in the secreted. Important role in determination of the surface properties of the casein micelles. In Homo sapiens (Human), this protein is Beta-casein (CSN2).